The following is a 204-amino-acid chain: Cysteine-rich protein 3 (204 aa).

An LIM zinc-binding 1 domain is found at 3–64 (WTCPRCQQPV…KPCYGALFGP (62 aa)). Residues 88–107 (ISLSPSNFSPPRPRTGLSRA) are disordered. Residues 122–183 (SLCPGCGDPV…IPCYGYLFGP (62 aa)) form the LIM zinc-binding 2 domain.

In terms of tissue distribution, expressed specifically by the thymus.

Its subcellular location is the cytoplasm. This Mus musculus (Mouse) protein is Cysteine-rich protein 3 (Crip3).